Reading from the N-terminus, the 556-residue chain is Formate--tetrahydrofolate ligase 1 (556 aa).

65 to 72 (TPAGEGKS) is an ATP binding site.

This sequence belongs to the formate--tetrahydrofolate ligase family.

The enzyme catalyses (6S)-5,6,7,8-tetrahydrofolate + formate + ATP = (6R)-10-formyltetrahydrofolate + ADP + phosphate. It functions in the pathway one-carbon metabolism; tetrahydrofolate interconversion. The chain is Formate--tetrahydrofolate ligase 1 from Streptococcus pyogenes serotype M28 (strain MGAS6180).